The following is a 434-amino-acid chain: Glutamate-1-semialdehyde 2,1-aminomutase (434 aa).

At lysine 274 the chain carries N6-(pyridoxal phosphate)lysine.

It belongs to the class-III pyridoxal-phosphate-dependent aminotransferase family. HemL subfamily. In terms of assembly, homodimer. Pyridoxal 5'-phosphate is required as a cofactor.

Its subcellular location is the cytoplasm. The enzyme catalyses (S)-4-amino-5-oxopentanoate = 5-aminolevulinate. It participates in porphyrin-containing compound metabolism; protoporphyrin-IX biosynthesis; 5-aminolevulinate from L-glutamyl-tRNA(Glu): step 2/2. In Acidovorax sp. (strain JS42), this protein is Glutamate-1-semialdehyde 2,1-aminomutase.